The following is a 164-amino-acid chain: Low molecular weight protein-tyrosine-phosphatase (164 aa).

C9 (nucleophile) is an active-site residue. R15 is an active-site residue. Residue D128 is the Proton donor of the active site.

It belongs to the low molecular weight phosphotyrosine protein phosphatase family.

It catalyses the reaction O-phospho-L-tyrosyl-[protein] + H2O = L-tyrosyl-[protein] + phosphate. Acts on tyrosine phosphorylated proteins, low-MW aryl phosphates and natural and synthetic acyl phosphates. May be involved in the regulation of sulfur amino acid metabolism. This chain is Low molecular weight protein-tyrosine-phosphatase (ptpA), found in Streptomyces coelicolor (strain ATCC BAA-471 / A3(2) / M145).